A 332-amino-acid polypeptide reads, in one-letter code: Methionine synthase (332 aa).

The Zn(2+) site is built by H211, C213, and C296.

It belongs to the archaeal MetE family. The cofactor is Zn(2+).

It participates in amino-acid biosynthesis; L-methionine biosynthesis via de novo pathway. Functionally, catalyzes the transfer of a methyl group to L-homocysteine resulting in methionine formation. The physiological methyl donor is unknown. The polypeptide is Methionine synthase (Saccharolobus islandicus (strain L.S.2.15 / Lassen #1) (Sulfolobus islandicus)).